Reading from the N-terminus, the 268-residue chain is TAEEKEVLYTLFHLHEEVIDIKHRKKQRNKYSVRETWDKIVKDFNSHPHVSAMRNIKQIQKFWLNSRLRKQYPYRDGSSSNLSSGSAKISSVSVSVASAVPQQQQQQHHQQHDNVKEEPEYQISPDASEHNPQADTFDEIEMDANDVSEIDEDPMEQQQQQQQEAQAQAQAQAQVQSAAAEMQKMQQVNAVAVAAAAAANATMINTHQINVDQISAEKLTLNDLLHFKTARPREEIILQIKHPSEATATQIHTIPTQAQQHPMATITA.

A DNA-binding region spans residues 1 to 72; that stretch reads TAEEKEVLYT…WLNSRLRKQY (72 aa). A compositionally biased stretch (low complexity) spans 94-108; sequence VSVASAVPQQQQQQH. The tract at residues 94-133 is disordered; sequence VSVASAVPQQQQQQHHQQHDNVKEEPEYQISPDASEHNPQ. Basic and acidic residues predominate over residues 110–119; sequence QQHDNVKEEP.

In terms of assembly, self-associates forming complexes of several hundred monomers.

Its subcellular location is the nucleus. Functionally, involved in transvection phenomena (= synapsis-dependent gene expression), where the synaptic pairing of chromosomes carrying genes with which zeste interacts influences the expression of these genes. Zeste binds to DNA and stimulates transcription from a nearby promoter. This chain is Regulatory protein zeste (z), found in Drosophila sechellia (Fruit fly).